A 259-amino-acid polypeptide reads, in one-letter code: Adenosylcobinamide-GDP ribazoletransferase (259 aa).

6 helical membrane passes run 37–57 (ASRY…LVYS), 58–78 (VMLH…ASVL), 118–138 (ALAL…LALF), 143–163 (VSLA…SFIF), 195–215 (AAIS…LGLL), and 237–257 (LGAT…IVGA).

It belongs to the CobS family. Requires Mg(2+) as cofactor.

It is found in the cell inner membrane. It catalyses the reaction alpha-ribazole + adenosylcob(III)inamide-GDP = adenosylcob(III)alamin + GMP + H(+). It carries out the reaction alpha-ribazole 5'-phosphate + adenosylcob(III)inamide-GDP = adenosylcob(III)alamin 5'-phosphate + GMP + H(+). The protein operates within cofactor biosynthesis; adenosylcobalamin biosynthesis; adenosylcobalamin from cob(II)yrinate a,c-diamide: step 7/7. Joins adenosylcobinamide-GDP and alpha-ribazole to generate adenosylcobalamin (Ado-cobalamin). Also synthesizes adenosylcobalamin 5'-phosphate from adenosylcobinamide-GDP and alpha-ribazole 5'-phosphate. The sequence is that of Adenosylcobinamide-GDP ribazoletransferase from Shewanella piezotolerans (strain WP3 / JCM 13877).